The chain runs to 511 residues: Sorting nexin MVP1 (511 aa).

Positions 1-36 are disordered; that stretch reads MDNYEGSDPWNTSSNAWTKDDDHVVSTTNSEPSLNG. The span at 25-36 shows a compositional bias: polar residues; the sequence is VSTTNSEPSLNG. The PX domain occupies 128–247; sequence DADIIIIEEI…TFLTVRTDLT (120 aa). A 1,2-diacyl-sn-glycero-3-phospho-(1D-myo-inositol-3-phosphate) contacts are provided by Arg-172, Ser-174, Lys-198, and Arg-213.

It belongs to the sorting nexin family. As to quaternary structure, homodimer. Forms an autoinhibited tetramer consisting of 2 homodimers that self-interact, wherein the membrane-interacting BAR surfaces are sequestered and the PX lipid-binding sites are occluded. Interacts with VPS1.

It localises to the cytoplasm. The protein localises to the endosome membrane. Required for vacuolar protein sorting. Component of the retromer-mediated endosome-to-Golgi retrograde pathway. Required for efficient cargo export from the endosome, promoting VPS1-mediated fission of retromer-coated tubules that bud from the endosome. The sequence is that of Sorting nexin MVP1 (MVP1) from Saccharomyces cerevisiae (strain ATCC 204508 / S288c) (Baker's yeast).